Reading from the N-terminus, the 1290-residue chain is Nonribosomal peptide synthetase 6 (1290 aa).

The disordered stretch occupies residues 1–27 (MTAIDVPWLSTPRRDNSHGTRSNSSCQ). Residues 260 to 657 (SYQELDCQAS…AQVEHHLRSC (398 aa)) form an adenylation region. The Carrier domain occupies 775 to 851 (APETELERKL…GLAQTHRHPV (77 aa)). At Ser-812 the chain carries O-(pantetheine 4'-phosphoryl)serine. Residues 846 to 870 (THRHPVRRAEVPRSSHDPDPFGRVR) are disordered. Over residues 852 to 870 (RRAEVPRSSHDPDPFGRVR) the composition is skewed to basic and acidic residues. Residues 914 to 1162 (GGQLDPEQLR…PCMNIIPVRV (249 aa)) are condensation.

The protein belongs to the NRP synthetase family.

Functionally, nonribosomal peptide synthesis (NRPS) is a key mechanism responsible for the biosynthesis of bioactive metabolites which are potentially contributing to organismal virulence. The polypeptide is Nonribosomal peptide synthetase 6 (NRPS6) (Aspergillus fumigatus (strain ATCC MYA-4609 / CBS 101355 / FGSC A1100 / Af293) (Neosartorya fumigata)).